The sequence spans 575 residues: Preterminal protein (575 aa).

The Nuclear localization signal signature appears at 309 to 318; that stretch reads RLPRVTRRRR. Positions 314–340 are disordered; that stretch reads TRRRRRPPSPAPPPEEIEEAAMEVEEP. The segment covering 328-340 has biased composition (acidic residues); sequence EEIEEAAMEVEEP. An O-(5'-phospho-DNA)-serine modification is found at Ser-510.

It belongs to the adenoviridae terminal protein family. In terms of assembly, heterodimer with the polymerase; this heterodimer binds to bp 9 to 18 of the genome. Interacts with host POU2F1; POU2F1 binds to the auxiliary sequences in the inverted terminal repeats and tethers the pTP-POL heterodimer to the origin DNA thereby participating in the assembly of the pre-initiation complex (POL-TP-DBP-NFIA-POU2F1). In terms of processing, preterminal protein is used to replicate viral genome, upon genomic encapsidation it is processed first into iTP and finally into TP by adenovirus protease.

Its subcellular location is the host nucleus matrix. Protein covalently bound to the viral DNA that acts as a primer for viral genomic replication by DNA strand displacement. Assembles on the viral origin of replication in an initiation complex with viral polymerase, DBP, host NFIA and host POU2F1/OCT1. During initiation, the polymerase covalently couples the first dCTP with Ser-580 of pTP. The terminal protein stimulates the template activity over 20 fold compared to protein-free templates. Neo-synthesized viral genomes are linked to two preterminal proteins, one for each 5' end. These new genomes are encapsidated in the nucleus, and during capsid maturation by viral protease, preterminal protein is first cleaved into intermediary (iTP), then into mature TP. May play a role in host nuclear matrix localization of genomic DNA. The chain is Preterminal protein from Fowl adenovirus A serotype 1 (strain CELO / Phelps) (FAdV-1).